The primary structure comprises 332 residues: Protein FAM131B (332 aa).

The disordered stretch occupies residues 1-22 (MDSTSSLHGSSLHRPSTEQTRT). A Phosphoserine modification is found at serine 47. Positions 95–114 (PTIQPQHSHEAVRRDTDAYS) are disordered. The segment covering 101–111 (HSHEAVRRDTD) has biased composition (basic and acidic residues). 2 positions are modified to phosphoserine: serine 114 and serine 117. Positions 221 to 332 (LGPAFDDSQP…FDEEEGDANN (112 aa)) are disordered. Composition is skewed to basic and acidic residues over residues 272–281 (PVEEEKRPLA) and 288–302 (AGCR…REDP). A phosphoserine mark is found at serine 295, serine 297, and serine 313. The residue at position 316 (threonine 316) is a Phosphothreonine. Residues serine 317, serine 318, and serine 322 each carry the phosphoserine modification. The segment covering 323 to 332 (FDEEEGDANN) has biased composition (acidic residues).

This sequence belongs to the FAM131 family.

The protein is Protein FAM131B (Fam131b) of Mus musculus (Mouse).